Here is a 329-residue protein sequence, read N- to C-terminus: MASQLTDAFARKFFYLRLSITDVCNFRCTYCLPDGYKPGAVNNNGFLSVDEVRRVTRAFSALGTEKVRLTGGEPSLRRDFTEIIAAVRENPAIRQIAVTTNGYRLARDVERWRDAGLTAINVSVDSLDARQFHAITGQDKFHQVMDGIDAAFAAGFDKVKVNTVLMRDVNHHQLDTFLAWIQPRRIQLRFIELMETGEGSDLFRRHHLSGMVLRDELLRRGWIHQIRQRSDGPAQVFCHPDYAGEIGLIMPYEKDFCATCNRLRVSSVGKLHLCLFGEGGVDLRDLMVEDEQQAELEARIAEALTHKKQTHFLHQGNTGITQNLSYIGG.

Residues 8–234 form the Radical SAM core domain; it reads AFARKFFYLR…QIRQRSDGPA (227 aa). Residue Arg17 coordinates GTP. The [4Fe-4S] cluster site is built by Cys24 and Cys28. Tyr30 lines the S-adenosyl-L-methionine pocket. A [4Fe-4S] cluster-binding site is contributed by Cys31. Arg68 is a GTP binding site. Position 72 (Gly72) interacts with S-adenosyl-L-methionine. Thr99 contributes to the GTP binding site. Ser123 is a binding site for S-adenosyl-L-methionine. Lys160 lines the GTP pocket. Met194 is a binding site for S-adenosyl-L-methionine. [4Fe-4S] cluster contacts are provided by Cys257 and Cys260. A GTP-binding site is contributed by 262–264; sequence RLR. Position 274 (Cys274) interacts with [4Fe-4S] cluster.

The protein belongs to the radical SAM superfamily. MoaA family. In terms of assembly, monomer and homodimer. It depends on [4Fe-4S] cluster as a cofactor.

The catalysed reaction is GTP + AH2 + S-adenosyl-L-methionine = (8S)-3',8-cyclo-7,8-dihydroguanosine 5'-triphosphate + 5'-deoxyadenosine + L-methionine + A + H(+). Its pathway is cofactor biosynthesis; molybdopterin biosynthesis. Its function is as follows. Catalyzes the cyclization of GTP to (8S)-3',8-cyclo-7,8-dihydroguanosine 5'-triphosphate. This Klebsiella pneumoniae (strain 342) protein is GTP 3',8-cyclase.